The sequence spans 246 residues: 23S rRNA (guanosine-2'-O-)-methyltransferase RlmB (246 aa).

Positions 197, 217, and 226 each coordinate S-adenosyl-L-methionine.

This sequence belongs to the class IV-like SAM-binding methyltransferase superfamily. RNA methyltransferase TrmH family. RlmB subfamily.

Its subcellular location is the cytoplasm. The enzyme catalyses guanosine(2251) in 23S rRNA + S-adenosyl-L-methionine = 2'-O-methylguanosine(2251) in 23S rRNA + S-adenosyl-L-homocysteine + H(+). Its function is as follows. Specifically methylates the ribose of guanosine 2251 in 23S rRNA. The polypeptide is 23S rRNA (guanosine-2'-O-)-methyltransferase RlmB (Haemophilus influenzae (strain ATCC 51907 / DSM 11121 / KW20 / Rd)).